Consider the following 45-residue polypeptide: Photosystem II reaction center protein K (45 aa).

The propeptide occupies 1–8 (MDFALLLA). Residues 24-44 (LPLIPLFFLLLAFVWQAAVGF) form a helical membrane-spanning segment.

Belongs to the PsbK family. In terms of assembly, PSII is composed of 1 copy each of membrane proteins PsbA, PsbB, PsbC, PsbD, PsbE, PsbF, PsbH, PsbI, PsbJ, PsbK, PsbL, PsbM, PsbT, PsbX, PsbY, PsbZ, Psb30/Ycf12, peripheral proteins PsbO, CyanoQ (PsbQ), PsbU, PsbV and a large number of cofactors. It forms dimeric complexes.

The protein localises to the cellular thylakoid membrane. Its function is as follows. One of the components of the core complex of photosystem II (PSII). PSII is a light-driven water:plastoquinone oxidoreductase that uses light energy to abstract electrons from H(2)O, generating O(2) and a proton gradient subsequently used for ATP formation. It consists of a core antenna complex that captures photons, and an electron transfer chain that converts photonic excitation into a charge separation. The protein is Photosystem II reaction center protein K of Gloeothece citriformis (strain PCC 7424) (Cyanothece sp. (strain PCC 7424)).